The sequence spans 249 residues: MVAFDANEILTPFCEGHREGAILFDCQRMRQVEYGLFVPAWWGERAHPVSEGGRGSAWFVEASFGNAVLRQYRRGGMIAMLNRDRYFWCGGHRTRSVLEFRLMRELISRGLPVPTPLAACYVRYGVQYRAAILIERLEGVSSLAMCIRGNSKETHWEQIGRMISRFHREGLDHADLNAHNILLDPAGQCWLIDFDRGALRIPATKWRERNLARLLRSLLKIRGERSVDAVYRDFERLRRAYDLAWSRGC.

Residue aspartate 175 is part of the active site.

The protein belongs to the protein kinase superfamily. KdkA/RfaP family.

The protein resides in the cell inner membrane. It carries out the reaction an alpha-Kdo-(2-&gt;6)-lipid IVA + ATP = a 4-O-phospho-alpha-Kdo-(2-&gt;6)-lipid IVA + ADP + H(+). It participates in bacterial outer membrane biogenesis; LPS core biosynthesis. Catalyzes the ATP-dependent phosphorylation of the 3-deoxy-D-manno-octulosonic acid (Kdo) residue in Kdo-lipid IV(A) at the 4-OH position. This chain is 3-deoxy-D-manno-octulosonic acid kinase, found in Xylella fastidiosa (strain M12).